The chain runs to 420 residues: UDP-N-acetylglucosamine 1-carboxyvinyltransferase (420 aa).

22-23 (KN) lines the phosphoenolpyruvate pocket. Arg-93 is a binding site for UDP-N-acetyl-alpha-D-glucosamine. The active-site Proton donor is Cys-117. Cys-117 is subject to 2-(S-cysteinyl)pyruvic acid O-phosphothioketal. Residues Asp-307 and Val-329 each coordinate UDP-N-acetyl-alpha-D-glucosamine.

This sequence belongs to the EPSP synthase family. MurA subfamily.

Its subcellular location is the cytoplasm. It catalyses the reaction phosphoenolpyruvate + UDP-N-acetyl-alpha-D-glucosamine = UDP-N-acetyl-3-O-(1-carboxyvinyl)-alpha-D-glucosamine + phosphate. The protein operates within cell wall biogenesis; peptidoglycan biosynthesis. Its function is as follows. Cell wall formation. Adds enolpyruvyl to UDP-N-acetylglucosamine. In Marinobacter nauticus (strain ATCC 700491 / DSM 11845 / VT8) (Marinobacter aquaeolei), this protein is UDP-N-acetylglucosamine 1-carboxyvinyltransferase.